The sequence spans 246 residues: Probable transcriptional regulatory protein COSY_0365 (246 aa).

It belongs to the TACO1 family.

The protein localises to the cytoplasm. This chain is Probable transcriptional regulatory protein COSY_0365, found in Vesicomyosocius okutanii subsp. Calyptogena okutanii (strain HA).